Here is a 340-residue protein sequence, read N- to C-terminus: 4-hydroxythreonine-4-phosphate dehydrogenase (340 aa).

Residues His-141 and Thr-142 each coordinate substrate. A divalent metal cation-binding residues include His-171, His-216, and His-271. Positions 279, 288, and 297 each coordinate substrate.

This sequence belongs to the PdxA family. In terms of assembly, homodimer. Zn(2+) serves as cofactor. It depends on Mg(2+) as a cofactor. Requires Co(2+) as cofactor.

Its subcellular location is the cytoplasm. The catalysed reaction is 4-(phosphooxy)-L-threonine + NAD(+) = 3-amino-2-oxopropyl phosphate + CO2 + NADH. It participates in cofactor biosynthesis; pyridoxine 5'-phosphate biosynthesis; pyridoxine 5'-phosphate from D-erythrose 4-phosphate: step 4/5. In terms of biological role, catalyzes the NAD(P)-dependent oxidation of 4-(phosphooxy)-L-threonine (HTP) into 2-amino-3-oxo-4-(phosphooxy)butyric acid which spontaneously decarboxylates to form 3-amino-2-oxopropyl phosphate (AHAP). The chain is 4-hydroxythreonine-4-phosphate dehydrogenase from Desulforapulum autotrophicum (strain ATCC 43914 / DSM 3382 / VKM B-1955 / HRM2) (Desulfobacterium autotrophicum).